A 341-amino-acid chain; its full sequence is MSVLDALWEDRDVRFDLSAQQMKTRPGEVLIDCLDSIEDTKGNNGDRGRLLVTNLRILWHSLALSRVNVSVGYNCILNITTRTANSKLRGQTEALYILTKCNSTRFEFIFTNLVPGSPRLFTSVMAVHRAYETSKMYRDFKLRSALIQNKQLRLLPQEHVYDKINGVWNLSSDQGNLGTFFITNVRIVWHANMNDSFNVSIPYLQIRSIKIRDSKFGLALVIESSQQSGGYVLGFKIDPVEKLQESVKEINSLHKVYSASPIFGVDYEMEEKPQPLEALTVEQIQDDVEIDSDGHTDAFVAYFADGNKQQDREPVFSEELGLAIEKLKDGFTLQGLWEVMS.

The protein belongs to the BBS5 family. As to quaternary structure, part of BBSome complex, that contains BBS1, BBS2, BBS4, BBS5, BBS7, BBS8/TTC8, BBS9 and BBIP10. Binds to phosphoinositides. Interacts with CCDC28B. Interacts with SMO; the interaction is indicative for the association of SMO with the BBsome complex to facilitate ciliary localization of SMO. Interacts with PKD1. Interacts with DLEC1.

Its subcellular location is the cell projection. The protein localises to the cilium membrane. It is found in the cytoplasm. The protein resides in the cytoskeleton. It localises to the cilium basal body. Its subcellular location is the microtubule organizing center. The protein localises to the centrosome. It is found in the centriolar satellite. The BBSome complex is thought to function as a coat complex required for sorting of specific membrane proteins to the primary cilia. The BBSome complex is required for ciliogenesis but is dispensable for centriolar satellite function. This ciliogenic function is mediated in part by the Rab8 GDP/GTP exchange factor, which localizes to the basal body and contacts the BBSome. Rab8(GTP) enters the primary cilium and promotes extension of the ciliary membrane. Firstly the BBSome associates with the ciliary membrane and binds to RAB3IP/Rabin8, the guanosyl exchange factor (GEF) for Rab8 and then the Rab8-GTP localizes to the cilium and promotes docking and fusion of carrier vesicles to the base of the ciliary membrane. The BBSome complex, together with the LTZL1, controls SMO ciliary trafficking and contributes to the sonic hedgehog (SHH) pathway regulation. Required for BBSome complex ciliary localization but not for the proper complex assembly. The sequence is that of BBSome complex member BBS5 (BBS5) from Homo sapiens (Human).